The chain runs to 61 residues: Metallothionein-1B (61 aa).

The tract at residues 1–29 (MDPNCSCVAGESCTCAGSCKCKQCRCASC) is beta. A divalent metal cation contacts are provided by C5, C7, C13, C15, C19, C21, C24, C26, C29, C33, C34, C36, C37, C41, C44, C48, C50, C57, C59, and C60. An alpha region spans residues 30–61 (KKSCCSCCPVGCAKCAQGCVCKGASDKCSCCA).

Belongs to the metallothionein superfamily. Type 1 family.

In terms of biological role, metallothioneins have a high content of cysteine residues that bind various heavy metals; these proteins are transcriptionally regulated by both heavy metals and glucocorticoids. In Equus caballus (Horse), this protein is Metallothionein-1B.